A 360-amino-acid chain; its full sequence is Peptide chain release factor 1 (360 aa).

Gln235 carries the post-translational modification N5-methylglutamine. The span at 280–293 (DKQSHEQQAKEAAT) shows a compositional bias: basic and acidic residues. The segment at 280–300 (DKQSHEQQAKEAATRKSLIGS) is disordered.

Belongs to the prokaryotic/mitochondrial release factor family. Methylated by PrmC. Methylation increases the termination efficiency of RF1.

It localises to the cytoplasm. In terms of biological role, peptide chain release factor 1 directs the termination of translation in response to the peptide chain termination codons UAG and UAA. This chain is Peptide chain release factor 1, found in Paraburkholderia phytofirmans (strain DSM 17436 / LMG 22146 / PsJN) (Burkholderia phytofirmans).